The sequence spans 421 residues: UDP-N-acetylglucosamine 1-carboxyvinyltransferase 1 (421 aa).

Position 22–23 (22–23) interacts with phosphoenolpyruvate; sequence KN. UDP-N-acetyl-alpha-D-glucosamine is bound at residue arginine 95. Residue cysteine 119 is the Proton donor of the active site. Residue cysteine 119 is modified to 2-(S-cysteinyl)pyruvic acid O-phosphothioketal. Residues 124-128, aspartate 308, and valine 330 contribute to the UDP-N-acetyl-alpha-D-glucosamine site; that span reads RPIEQ.

This sequence belongs to the EPSP synthase family. MurA subfamily.

It localises to the cytoplasm. It catalyses the reaction phosphoenolpyruvate + UDP-N-acetyl-alpha-D-glucosamine = UDP-N-acetyl-3-O-(1-carboxyvinyl)-alpha-D-glucosamine + phosphate. It participates in cell wall biogenesis; peptidoglycan biosynthesis. Functionally, cell wall formation. Adds enolpyruvyl to UDP-N-acetylglucosamine. The chain is UDP-N-acetylglucosamine 1-carboxyvinyltransferase 1 from Staphylococcus aureus (strain MRSA252).